A 152-amino-acid chain; its full sequence is Xanthine-guanine phosphoribosyltransferase (152 aa).

5-phospho-alpha-D-ribose 1-diphosphate is bound by residues 37-38 (RG), Arg-69, and 88-96 (DDLVDTGGT). Arg-69 contacts GMP. Asp-89 is a binding site for Mg(2+). Residues Asp-92 and Ile-135 each contribute to the guanine site. Xanthine contacts are provided by Asp-92 and Ile-135. GMP is bound by residues 92-96 (DTGGT) and 134-135 (WI).

This sequence belongs to the purine/pyrimidine phosphoribosyltransferase family. XGPT subfamily. In terms of assembly, homotetramer. Mg(2+) serves as cofactor.

It is found in the cell inner membrane. It catalyses the reaction GMP + diphosphate = guanine + 5-phospho-alpha-D-ribose 1-diphosphate. The catalysed reaction is XMP + diphosphate = xanthine + 5-phospho-alpha-D-ribose 1-diphosphate. The enzyme catalyses IMP + diphosphate = hypoxanthine + 5-phospho-alpha-D-ribose 1-diphosphate. It participates in purine metabolism; GMP biosynthesis via salvage pathway; GMP from guanine: step 1/1. It functions in the pathway purine metabolism; XMP biosynthesis via salvage pathway; XMP from xanthine: step 1/1. Purine salvage pathway enzyme that catalyzes the transfer of the ribosyl-5-phosphate group from 5-phospho-alpha-D-ribose 1-diphosphate (PRPP) to the N9 position of the 6-oxopurines guanine and xanthine to form the corresponding ribonucleotides GMP (guanosine 5'-monophosphate) and XMP (xanthosine 5'-monophosphate), with the release of PPi. To a lesser extent, also acts on hypoxanthine. In Pectobacterium carotovorum subsp. carotovorum (strain PC1), this protein is Xanthine-guanine phosphoribosyltransferase.